Consider the following 288-residue polypeptide: UTP--glucose-1-phosphate uridylyltransferase (288 aa).

Belongs to the UDPGP type 2 family.

The catalysed reaction is alpha-D-glucose 1-phosphate + UTP + H(+) = UDP-alpha-D-glucose + diphosphate. Its pathway is glycolipid metabolism; diglucosyl-diacylglycerol biosynthesis. Catalyzes the formation of UDP-glucose from glucose-1-phosphate and UTP. This is an intermediate step in the biosynthesis of diglucosyl-diacylglycerol (Glc2-DAG), i.e. the predominant glycolipid found in the S.aureus membrane, which is also used as a membrane anchor for lipoteichoic acid (LTA). The chain is UTP--glucose-1-phosphate uridylyltransferase (gtaB) from Staphylococcus aureus (strain bovine RF122 / ET3-1).